A 406-amino-acid polypeptide reads, in one-letter code: Eukaryotic initiation factor 4A-I (406 aa).

Positions 1–21 are disordered; that stretch reads MSASQDSRSRDNGPDGMEPEG. At serine 2 the chain carries N-acetylserine. The residue at position 4 (serine 4) is a Phosphoserine. The Q motif motif lies at 32 to 60; it reads DSLDDMNLSESLLRGIYAYGFEKPSAIQQ. Residues 63 to 234 form the Helicase ATP-binding domain; sequence ILSCIKGYDV…KKFMRDPIRI (172 aa). Position 76-83 (76-83) interacts with ATP; sequence AQSGTGKT. Lysine 118 is subject to N6-acetyllysine. Lysine 146 is covalently cross-linked (Glycyl lysine isopeptide (Lys-Gly) (interchain with G-Cter in SUMO2)). Threonine 158 carries the post-translational modification Phosphothreonine. Lysine 174 carries the N6-acetyllysine modification. The DEAD box motif lies at 182 to 185; that stretch reads DEAD. At lysine 193 the chain carries N6-acetyllysine. Lysine 225 is covalently cross-linked (Glycyl lysine isopeptide (Lys-Gly) (interchain with G-Cter in SUMO2)). Lysine 238 is modified (N6-acetyllysine; alternate). Lysine 238 is covalently cross-linked (Glycyl lysine isopeptide (Lys-Gly) (interchain with G-Cter in SUMO2); alternate). Positions 245-406 constitute a Helicase C-terminal domain; sequence GIRQFYINVE…EMPLNVADLI (162 aa). Residues lysine 309, lysine 369, and lysine 381 each participate in a glycyl lysine isopeptide (Lys-Gly) (interchain with G-Cter in SUMO2) cross-link.

It belongs to the DEAD box helicase family. eIF4A subfamily. EIF4F is a multi-subunit complex, the composition of which varies with external and internal environmental conditions. It is composed of at least EIF4A, EIF4E and EIF4G1/EIF4G3. Interacts with PAIP1, EIF4E and UPF2. Found in a complex with XPO7, EIF4A1, ARHGAP1, VPS26A, VPS29, VPS35 and SFN. May interact with NOM1. Interacts with PDCD4; this interferes with the interaction between EIF4A and EIF4G. Interacts with RBM4. Interacts with DDX3X in an RNA-independent manner. Interacts with PKP1 (via N-terminus); the interaction promotes EIF4A1 recruitment to the cap-dependent translation complex and EIF4A1 ATPase activity.

It is found in the cytoplasm. The protein localises to the perinuclear region. It localises to the cell membrane. The protein resides in the stress granule. The catalysed reaction is ATP + H2O = ADP + phosphate + H(+). In terms of biological role, ATP-dependent RNA helicase which is a subunit of the eIF4F complex involved in cap recognition and is required for mRNA binding to ribosome. In the current model of translation initiation, eIF4A unwinds RNA secondary structures in the 5'-UTR of mRNAs which is necessary to allow efficient binding of the small ribosomal subunit, and subsequent scanning for the initiator codon. As a result, promotes cell proliferation and growth. The polypeptide is Eukaryotic initiation factor 4A-I (EIF4A1) (Pongo abelii (Sumatran orangutan)).